A 475-amino-acid polypeptide reads, in one-letter code: NADH-quinone oxidoreductase subunit N (475 aa).

The next 14 membrane-spanning stretches (helical) occupy residues 7–27 (ISIA…VLLG), 40–60 (LLGA…SAVD), 74–94 (FIAI…LVAG), 105–125 (FEYT…LSAN), 127–147 (LMTL…LAAF), 161–181 (YFVL…LVYG), 191–211 (IAAA…LMAL), 242–262 (APKL…FGVY), 266–286 (WMLI…FGGL), 295–315 (LAYS…AGEV), 321–341 (VLTY…IVLA), 365–385 (LAVA…MAGF), 399–419 (ELYW…GYYL), and 448–468 (GATI…TGII).

This sequence belongs to the complex I subunit 2 family. In terms of assembly, NDH-1 is composed of 14 different subunits. Subunits NuoA, H, J, K, L, M, N constitute the membrane sector of the complex.

The protein resides in the cell inner membrane. It catalyses the reaction a quinone + NADH + 5 H(+)(in) = a quinol + NAD(+) + 4 H(+)(out). Its function is as follows. NDH-1 shuttles electrons from NADH, via FMN and iron-sulfur (Fe-S) centers, to quinones in the respiratory chain. The immediate electron acceptor for the enzyme in this species is believed to be ubiquinone. Couples the redox reaction to proton translocation (for every two electrons transferred, four hydrogen ions are translocated across the cytoplasmic membrane), and thus conserves the redox energy in a proton gradient. In Hirschia baltica (strain ATCC 49814 / DSM 5838 / IFAM 1418), this protein is NADH-quinone oxidoreductase subunit N.